A 115-amino-acid polypeptide reads, in one-letter code: U3-lycotoxin-Ls1r (115 aa).

Positions 1–20 are cleaved as a signal peptide; sequence MKFVLLFGVLLVTLFSYSSA. The propeptide occupies 21-44; sequence EMLDDFHQADEDELVSLIKKEEAR. 4 cysteine pairs are disulfide-bonded: C48–C63, C55–C72, C62–C87, and C74–C85.

The protein belongs to the neurotoxin 19 (CSTX) family. 01 subfamily. Expressed by the venom gland.

The protein resides in the secreted. This is U3-lycotoxin-Ls1r from Lycosa singoriensis (Wolf spider).